Here is a 1162-residue protein sequence, read N- to C-terminus: Sialidase (1162 aa).

BNR repeat units lie at residues 23–34, 163–174, and 209–220; these read KYSVDDGETWET, FYSEDDGKTWKF, and YESSDMEKPWVE. Asparagine 342 and asparagine 394 each carry an N-linked (GlcNAc...) asparagine glycan. The disordered stretch occupies residues 587–1123; the sequence is HMDSSSDSSA…STPSTPAGSS (537 aa). The segment covering 589-615 has biased composition (low complexity); it reads DSSSDSSAHSTPSTPADSSAHSTPSTP. The tract at residues 589–1120 is 44 X 12 AA tandem repeats, LTR domain; sequence DSSSDSSAHS…SAHSTPSTPA (532 aa). Composition is skewed to polar residues over residues 616-689 and 699-1123; these read VDSS…TPVD and PADS…AGSS. Residue asparagine 1125 is glycosylated (N-linked (GlcNAc...) asparagine).

It belongs to the glycosyl hydrolase 33 family.

It localises to the cell membrane. The enzyme catalyses Hydrolysis of alpha-(2-&gt;3)-, alpha-(2-&gt;6)-, alpha-(2-&gt;8)- glycosidic linkages of terminal sialic acid residues in oligosaccharides, glycoproteins, glycolipids, colominic acid and synthetic substrates.. Functionally, developmentally regulated neuraminidase implicated in parasite invasion of cells. The sequence is that of Sialidase (TCNA) from Trypanosoma cruzi.